We begin with the raw amino-acid sequence, 237 residues long: Large ribosomal subunit protein uL1 (237 aa).

Belongs to the universal ribosomal protein uL1 family. In terms of assembly, part of the 50S ribosomal subunit.

Its function is as follows. Binds directly to 23S rRNA. The L1 stalk is quite mobile in the ribosome, and is involved in E site tRNA release. Protein L1 is also a translational repressor protein, it controls the translation of the L11 operon by binding to its mRNA. The chain is Large ribosomal subunit protein uL1 from Synechococcus sp. (strain ATCC 27144 / PCC 6301 / SAUG 1402/1) (Anacystis nidulans).